The primary structure comprises 263 residues: N-acyl homoserine lactonase AttM (263 aa).

Zn(2+)-binding residues include His-103, His-105, Asp-107, His-108, His-180, Asp-202, and His-247.

Belongs to the metallo-beta-lactamase superfamily. Zn(2+) serves as cofactor.

The enzyme catalyses an N-acyl-L-homoserine lactone + H2O = an N-acyl-L-homoserine + H(+). This is N-acyl homoserine lactonase AttM from Agrobacterium fabrum (strain C58 / ATCC 33970) (Agrobacterium tumefaciens (strain C58)).